A 205-amino-acid chain; its full sequence is Probable transcription factor Ken (205 aa).

3 C2H2-type zinc fingers span residues 106–128 (YRCE…LRVH), 134–157 (FACR…CSVH), and 173–196 (YSCC…SGHH).

The protein resides in the nucleus. Probable transcription factor, which is required for terminalia development. This Drosophila yakuba (Fruit fly) protein is Probable transcription factor Ken (ken).